The sequence spans 399 residues: Long-chain primary alcohol dehydrogenase AdhA (399 aa).

It belongs to the iron-containing alcohol dehydrogenase family. In terms of assembly, homotetramer. The cofactor is Zn(2+).

It catalyses the reaction a primary alcohol + NADP(+) = an aldehyde + NADPH + H(+). Functionally, alcohol dehydrogenase active against primary long-chain alcohols. Pentan-1-ol is the optimum substrate in vitro, but also shows efficient dehydrogenase activity on propanol, hexanol, and ethanol. The chain is Long-chain primary alcohol dehydrogenase AdhA (adhA) from Thermoanaerobacter ethanolicus (Clostridium thermohydrosulfuricum).